Here is a 159-residue protein sequence, read N- to C-terminus: 6,7-dimethyl-8-ribityllumazine synthase (159 aa).

Residues Tyr23, 58 to 60, and 82 to 84 each bind 5-amino-6-(D-ribitylamino)uracil; these read AYE and TII. His90 serves as the catalytic Proton donor. Position 115 (Ile115) interacts with 5-amino-6-(D-ribitylamino)uracil. Arg129 is a (2S)-2-hydroxy-3-oxobutyl phosphate binding site.

This sequence belongs to the DMRL synthase family. Forms an icosahedral capsid composed of 60 subunits, arranged as a dodecamer of pentamers.

It carries out the reaction (2S)-2-hydroxy-3-oxobutyl phosphate + 5-amino-6-(D-ribitylamino)uracil = 6,7-dimethyl-8-(1-D-ribityl)lumazine + phosphate + 2 H2O + H(+). It functions in the pathway cofactor biosynthesis; riboflavin biosynthesis; riboflavin from 2-hydroxy-3-oxobutyl phosphate and 5-amino-6-(D-ribitylamino)uracil: step 1/2. Catalyzes the formation of 6,7-dimethyl-8-ribityllumazine by condensation of 5-amino-6-(D-ribitylamino)uracil with 3,4-dihydroxy-2-butanone 4-phosphate. This is the penultimate step in the biosynthesis of riboflavin. This chain is 6,7-dimethyl-8-ribityllumazine synthase, found in Buchnera aphidicola subsp. Baizongia pistaciae (strain Bp).